We begin with the raw amino-acid sequence, 121 residues long: Large ribosomal subunit protein bL20c (121 aa).

The protein belongs to the bacterial ribosomal protein bL20 family.

It is found in the plastid. The protein resides in the chloroplast. Binds directly to 23S ribosomal RNA and is necessary for the in vitro assembly process of the 50S ribosomal subunit. It is not involved in the protein synthesizing functions of that subunit. The polypeptide is Large ribosomal subunit protein bL20c (Lotus japonicus (Lotus corniculatus var. japonicus)).